Here is a 239-residue protein sequence, read N- to C-terminus: MEAFMVSFERQKDAKFCMYRENIPNFESTLSSITKSTNSIKILLEDISNVQKVITDPCEQSCSSCSPNVLNKFLGIEEKLVNNVEIPDSVPQKSTRPCLDDEKEGSSVVQPPESGNRHVQLISEQEFKSIPKYQLGRLTLDNLNEIVGKMDEFLTKKNAILGKTNKQITRQDREVLDNWRELEIKAKGRLPTTLFFIENDIRPLLTERLRLSFAKAIPCLRHIRRVREERCGPLTFYYA.

Positions 87–115 (PDSVPQKSTRPCLDDEKEGSSVVQPPESG) are disordered. The interval 116–239 (NRHVQLISEQ…RCGPLTFYYA (124 aa)) is microtubule binding.

The protein belongs to the SKA1 family. Component of the SKA complex, composed of two copies of ska-1 and a single copy of ska-3. The core complex associates with microtubules and may form dimeric assemblies. Interacts with ska-3 and microtubules.

The protein localises to the cytoplasm. The protein resides in the cytoskeleton. Its subcellular location is the spindle. It localises to the chromosome. It is found in the centromere. The protein localises to the kinetochore. Its function is as follows. Component of the SKA complex, a microtubule plus end-binding complex of the outer kinetochore that stabilizes spindle microtubule-kinetochore attachments, promotes alignment of chromosomes at the mitotic spindle equator (chromosome congression) and assists suppression of the spindle assembly checkpoint. Kinetochores, consisting of a centromere-associated inner segment and a microtubule-contacting outer segment, play a crucial role in chromosome segregation by mediating the physical connection between centromeric DNA and spindle microtubules. The outer kinetochore is made up of the ten-subunit KMN network complex, comprising the MIS12, NDC80 and KNL1 complexes, and auxiliary microtubule-associated components such as the SKA complex; together they connect the outer kinetochore with the inner kinetochore, bind microtubules, and mediate interactions with mitotic checkpoint proteins that delay anaphase until chromosomes are bioriented on the spindle. The SKA complex is loaded onto bioriented kinetochores and it facilitates chromosome congression by stabilizing microtubules and end-on attachment of the NDC80 complex to depolymerizing spindle microtubules, thereby assisting the poleward-moving kinetochore in withstanding microtubule pulling forces. The complex associates with dynamic microtubule plus-ends and can track both depolymerizing and elongating microtubules. The complex recruits protein phosphatase 1 (PP1) to the kinetochore in prometaphase and metaphase, to oppose spindle assembly checkpoint signaling and promote the onset of anaphase. In the complex, it mediates interactions with microtubules. During meiosis the SKA complex stabilizes the meiotic spindle and is required for its migration to the cortex. This is SKA complex subunit 1 from Caenorhabditis briggsae.